A 293-amino-acid polypeptide reads, in one-letter code: PHO85 cyclin PHO80 (293 aa).

2 positions are modified to phosphoserine; by PHO85: Ser234 and Ser267. Residues 254 to 272 are compositionally biased toward polar residues; the sequence is ESGSQTTQLKGSSSPNSHS. The tract at residues 254-293 is disordered; sequence ESGSQTTQLKGSSSPNSHSSQKRYSEAKDAHIYNKRSKPD. Positions 276–293 are enriched in basic and acidic residues; the sequence is RYSEAKDAHIYNKRSKPD.

The protein belongs to the cyclin family. PHO80 subfamily. Forms a cyclin-CDK complex with PHO85. PHO80-PHO85 forms a stable complex with its inhibitor PHO81 under both high- and low-phosphate conditions, but PHO81 only inhibits the kinase upon phosphate starvation. Interacts with transcription factor PHO4. In terms of processing, phosphorylation of Ser-267 by PHO85 is required to form an active cyclin-kinase complex and for function.

It localises to the cytoplasm. Its subcellular location is the nucleus. Its activity is regulated as follows. Inhibited by the CDK inhibitor (CKI) PHO81 in response to phosphate starvation. Cyclin partner of the cyclin-dependent kinase (CDK) PHO85. Negatively regulates the expression of phosphate-starvation-responsive genes under phosphate-rich conditions. The PHO80-PHO85 cyclin-CDK holoenzyme phosphorylates and inactivates the transcription factor PHO4, by preventing its association with the transcription factor PHO2 and the nuclear import receptor PSE1, and by promoting association with the nuclear export receptor MSN5, excluding PHO4 from the nucleus. PHO80-PHO85 phosphorylates and inactivates protein kinase RIM15 by retaining it in the cytoplasm, antagonizing RIM15-induced entry into stationary phase. PHO80-PHO85 also phosphorylates and inactivates the calcineurin-responsive transcription factor CRZ1, linking PHO85 to calcium signaling. In Saccharomyces cerevisiae (strain ATCC 204508 / S288c) (Baker's yeast), this protein is PHO85 cyclin PHO80 (PHO80).